The sequence spans 310 residues: tRNA uridine(34) hydroxylase (310 aa).

A Rhodanese domain is found at 127-225 (KDKNTIVVDT…YLEDMSKEES (99 aa)). Cys-185 acts as the Cysteine persulfide intermediate in catalysis.

It belongs to the TrhO family.

The enzyme catalyses uridine(34) in tRNA + AH2 + O2 = 5-hydroxyuridine(34) in tRNA + A + H2O. Functionally, catalyzes oxygen-dependent 5-hydroxyuridine (ho5U) modification at position 34 in tRNAs. The sequence is that of tRNA uridine(34) hydroxylase from Prochlorococcus marinus subsp. pastoris (strain CCMP1986 / NIES-2087 / MED4).